Here is a 358-residue protein sequence, read N- to C-terminus: 3-dehydroquinate synthase (358 aa).

NAD(+) is bound by residues 69 to 74 (DGEAHK), 103 to 107 (GVIGD), 127 to 128 (TT), Lys140, Lys149, and 167 to 170 (CLRT). Residues Glu182, His245, and His262 each contribute to the Zn(2+) site.

It belongs to the sugar phosphate cyclases superfamily. Dehydroquinate synthase family. Co(2+) is required as a cofactor. It depends on Zn(2+) as a cofactor. NAD(+) serves as cofactor.

It localises to the cytoplasm. It carries out the reaction 7-phospho-2-dehydro-3-deoxy-D-arabino-heptonate = 3-dehydroquinate + phosphate. It participates in metabolic intermediate biosynthesis; chorismate biosynthesis; chorismate from D-erythrose 4-phosphate and phosphoenolpyruvate: step 2/7. Its function is as follows. Catalyzes the conversion of 3-deoxy-D-arabino-heptulosonate 7-phosphate (DAHP) to dehydroquinate (DHQ). This chain is 3-dehydroquinate synthase, found in Tolumonas auensis (strain DSM 9187 / NBRC 110442 / TA 4).